The primary structure comprises 367 residues: Protein valois (367 aa).

WD repeat units lie at residues 101-139 (QAEHTVNIVRYAEDDFLLVALGDTRLQAWSTYSKVRDSQ), 152-192 (AHPT…MVST), and 198-238 (SHTD…PSST). Residues 309–367 (LAAMSNLPASVKVANVQAGHEFIYTHQDTHSRLTDAVWTDDSTLITIGHGRKMVTHAIK) form an interaction with csul region.

In terms of assembly, interacts with csul and tud. In oocytes, localizes to pole plasm and nuage (at protein level). Expressed stronger in the germline than in somatic cells. In the germarium it sometimes concentrates in perinuclear aggregates that disappear by stage 2 of oogenesis. At later stages, it is uniformly distributed in the nurse cells and oocyte, as well as in young embryos, with no particular enrichment at the posterior or inside the pole cells (at protein level).

It localises to the cytoplasm. Its function is as follows. Involved in specific localization of cytoplasmic proteins during the formation of pole plasm. Required for synthesis and/or stability of oskar protein (osk) and localization of tudor (tud) in both the nuage and posterior pole of the oocyte. Required for normal posterior localization of osk in later stages of oogenesis and for posterior localization of the vasa (vas) protein during the entire process of pole plasm assembly. May act by regulating the complex that contains the arginine N-methyltransferase csul. The protein is Protein valois (vls) of Drosophila melanogaster (Fruit fly).